The following is a 478-amino-acid chain: Catalase easC (478 aa).

The active site involves histidine 54. Residue tyrosine 343 coordinates heme. A disordered region spans residues 459–478 (VAEKARPDSPSRAQPGQLRL).

It belongs to the catalase family. The cofactor is heme.

The protein operates within alkaloid biosynthesis; ergot alkaloid biosynthesis. Its function is as follows. Catalase; part of the gene cluster that mediates the biosynthesis of fungal ergot alkaloid. DmaW catalyzes the first step of ergot alkaloid biosynthesis by condensing dimethylallyl diphosphate (DMAP) and tryptophan to form 4-dimethylallyl-L-tryptophan. The second step is catalyzed by the methyltransferase easF that methylates 4-dimethylallyl-L-tryptophan in the presence of S-adenosyl-L-methionine, resulting in the formation of 4-dimethylallyl-L-abrine. The catalase easC and the FAD-dependent oxidoreductase easE then transform 4-dimethylallyl-L-abrine to chanoclavine-I which is further oxidized by easD in the presence of NAD(+), resulting in the formation of chanoclavine-I aldehyde. Chanoclavine-I aldehyde is the precursor of ergoamides and ergopeptines in Clavicipitaceae, and clavine-type alcaloids such as fumiclavine in Trichocomaceae. However, the metabolites downstream of chanoclavine-I aldehyde in Arthrodermataceae have not been identified yet. This Trichophyton verrucosum (strain HKI 0517) protein is Catalase easC.